The following is a 424-amino-acid chain: CinA-like protein (424 aa).

It belongs to the CinA family.

The sequence is that of CinA-like protein from Syntrophobacter fumaroxidans (strain DSM 10017 / MPOB).